Consider the following 382-residue polypeptide: Lycopene beta-cyclase (382 aa).

6 to 36 (DLILVGAGLANGLIALRLQQQQPDMRILLID) contributes to the NAD(+) binding site.

It belongs to the lycopene cyclase family. FAD is required as a cofactor.

It is found in the cell inner membrane. The enzyme catalyses a carotenoid psi-end group = a carotenoid beta-end derivative. The catalysed reaction is all-trans-lycopene = gamma-carotene. It carries out the reaction gamma-carotene = all-trans-beta-carotene. It catalyses the reaction all-trans-neurosporene = beta-zeacarotene. The enzyme catalyses beta-zeacarotene = 7,8-dihydro-beta-carotene. Its pathway is carotenoid biosynthesis; beta-carotene biosynthesis. Its activity is regulated as follows. Activity is increased in the presence of NAD(P)H. NADPH is not involved directly in the cyclization reaction, but must play an indirect role, e.g. as an allosteric activator. Catalyzes the double cyclization reaction which converts lycopene to beta-carotene. Also catalyzes the double cyclization reaction which converts neurosporene to 7,8-dihydro-beta-carotene via monocyclic beta-zeacarotene. May also convert zeta-carotene to bicyclic 7,8,7',8'-tetrahydro-beta-carotene. The protein is Lycopene beta-cyclase of Pantoea ananas (Erwinia uredovora).